We begin with the raw amino-acid sequence, 539 residues long: MHDKILILDFGSQVTQLIARRVREAHVYCEIHPNDVSDDFVREFAPKAVILSGSHASTYEDHQLRAPQAVWDLGVPVLGICYGMQTMAVQLGGKVEWSDHREFGYAEMRAHGHTRLLDGIEDFTTAEGHGMLKVWMSHGDKVAELPPGFALMASTPSCPIAGMADEARGYYAVQFHPEVTHTVKGRQIIERFVLQIAGAKPDWIMKNHIEEAVAKIREQVGDEEVILGLSGGVDSSVAAALIHRAIGDQLTCVFVDHGLLRLNEGKMVLDMFEGRLHAKVVHVDASDQFLGHLAGVTDPEAKRKIIGREFVEVFQAEAKKLSKAKWLAQGTIYPDVVESGGTKTKKATTIKSHHNVGGLPETLGLKLLEPLRDLFKDEVRELGVALGLPPEMVYRHPFPGPGLGVRILGEVKREYAELLRRADAIFIEELRNTTATAQDAAAGLCGEADVGKSWYDLTSQAFAVFLPVKSVGVMGDGRTYDYVTSLRAVQTTDFMTAHWAHLPYALLGRASNRIINEVRGINRVVYDISGKPPATIEWE.

Residues 4-202 (KILILDFGSQ…VLQIAGAKPD (199 aa)) form the Glutamine amidotransferase type-1 domain. The active-site Nucleophile is C81. Residues H176 and E178 contribute to the active site. A GMPS ATP-PPase domain is found at 203 to 395 (WIMKNHIEEA…LGLPPEMVYR (193 aa)). 230 to 236 (SGGVDSS) is an ATP binding site.

As to quaternary structure, homodimer.

The enzyme catalyses XMP + L-glutamine + ATP + H2O = GMP + L-glutamate + AMP + diphosphate + 2 H(+). Its pathway is purine metabolism; GMP biosynthesis; GMP from XMP (L-Gln route): step 1/1. In terms of biological role, catalyzes the synthesis of GMP from XMP. This chain is GMP synthase [glutamine-hydrolyzing], found in Burkholderia orbicola (strain AU 1054).